Reading from the N-terminus, the 86-residue chain is Mu-theraphotoxin-Cg2a 3 (86 aa).

Positions 1 to 21 (MKVSVVITLAVLGVMFVWASA) are cleaved as a signal peptide. Residues 22–50 (AELKERGSDQRDSPAWIKSMERIFQSEER) constitute a propeptide that is removed on maturation. Disulfide bonds link cysteine 52–cysteine 66, cysteine 59–cysteine 71, and cysteine 65–cysteine 78. Phenylalanine amide is present on phenylalanine 84.

This sequence belongs to the neurotoxin 10 (Hwtx-1) family. 37 (Jztx-31) subfamily. Expressed by the venom gland.

Its subcellular location is the secreted. In terms of biological role, inhibits both peak current and fast inactivation of voltage-gated sodium channels (Nav) channels. Inhibits the inactivation of Nav on DRG neurons (EC(50)=1.77 uM) and peak current of cardiac myocytes (IC(50)=0.90 uM). This is Mu-theraphotoxin-Cg2a 3 from Chilobrachys guangxiensis (Chinese earth tiger tarantula).